The primary structure comprises 456 residues: CBL-interacting serine/threonine-protein kinase 2 (456 aa).

Residues Y12 to F266 enclose the Protein kinase domain. Residues L18 to V26 and K41 each bind ATP. D134 functions as the Proton acceptor in the catalytic mechanism. The segment at D152–E181 is activation loop. Phosphoserine is present on S156. T170 is subject to Phosphothreonine. Residues M280 to P309 form a disordered region. An NAF domain is found at P309 to G333. The tract at residues K338–I367 is PPI.

The protein belongs to the protein kinase superfamily. CAMK Ser/Thr protein kinase family. SNF1 subfamily. Interacts with CBL2, CBL3 and CBL5. Mn(2+) serves as cofactor.

The enzyme catalyses L-seryl-[protein] + ATP = O-phospho-L-seryl-[protein] + ADP + H(+). The catalysed reaction is L-threonyl-[protein] + ATP = O-phospho-L-threonyl-[protein] + ADP + H(+). Functionally, CIPK serine-threonine protein kinases interact with CBL proteins. Binding of a CBL protein to the regulatory NAF domain of CIPK protein lead to the activation of the kinase in a calcium-dependent manner. This chain is CBL-interacting serine/threonine-protein kinase 2 (CIPK2), found in Arabidopsis thaliana (Mouse-ear cress).